We begin with the raw amino-acid sequence, 242 residues long: Lactate utilization protein A 2 (242 aa).

It belongs to the LutA/YkgE family.

Is involved in L-lactate degradation and allows cells to grow with lactate as the sole carbon source. The sequence is that of Lactate utilization protein A 2 from Bacillus cereus (strain Q1).